The following is a 292-amino-acid chain: Inositol oxygenase (292 aa).

Substrate contacts are provided by residues arginine 33 and 88-90 (DES). Positions 101, 128, and 129 each coordinate Fe cation. Residues lysine 132 and 149–150 (GD) each bind substrate. Fe cation is bound by residues histidine 201, histidine 227, and aspartate 260. 227-228 (HS) lines the substrate pocket.

This sequence belongs to the myo-inositol oxygenase family. The cofactor is Fe cation.

It localises to the cytoplasm. It carries out the reaction myo-inositol + O2 = D-glucuronate + H2O + H(+). The protein operates within polyol metabolism; myo-inositol degradation into D-glucuronate; D-glucuronate from myo-inositol: step 1/1. This chain is Inositol oxygenase (miox), found in Dictyostelium discoideum (Social amoeba).